The primary structure comprises 218 residues: Small ribosomal subunit protein uS3c (218 aa).

In terms of domain architecture, KH type-2 spans 47-118 (VQKQIKNSSN…KIQITLKNVL (72 aa)).

The protein belongs to the universal ribosomal protein uS3 family. In terms of assembly, part of the 30S ribosomal subunit.

The protein resides in the plastid. The protein localises to the chloroplast. This is Small ribosomal subunit protein uS3c (rps3) from Angiopteris evecta (Mule's foot fern).